A 141-amino-acid polypeptide reads, in one-letter code: Hemoglobin subunit alpha (141 aa).

The region spanning Val-1–Arg-141 is the Globin domain. Position 3 is a phosphoserine (Ser-3). Residue Lys-7 is modified to N6-succinyllysine. Thr-8 bears the Phosphothreonine mark. Lys-11 is subject to N6-succinyllysine. Lys-16 carries the post-translational modification N6-acetyllysine; alternate. Lys-16 bears the N6-succinyllysine; alternate mark. A Phosphotyrosine modification is found at Tyr-24. At Ser-35 the chain carries Phosphoserine. Lys-40 is modified (N6-succinyllysine). A Phosphoserine modification is found at Ser-49. His-58 is an O2 binding site. A heme b-binding site is contributed by His-87. Ser-102 is modified (phosphoserine). Thr-108 is subject to Phosphothreonine. Residues Ser-124 and Ser-131 each carry the phosphoserine modification. Phosphothreonine is present on residues Thr-134 and Thr-137. Ser-138 is subject to Phosphoserine.

The protein belongs to the globin family. Heterotetramer of two alpha chains and two beta chains. Red blood cells.

In terms of biological role, involved in oxygen transport from the lung to the various peripheral tissues. Functionally, hemopressin acts as an antagonist peptide of the cannabinoid receptor CNR1. Hemopressin-binding efficiently blocks cannabinoid receptor CNR1 and subsequent signaling. This is Hemoglobin subunit alpha (HBA) from Taphozous georgianus (Sharp-nosed tomb bat).